The chain runs to 155 residues: Protein SprT-like (155 aa).

One can recognise a SprT-like domain in the interval 7 to 145 (QRHMEEVSLQ…GSCGGKLIQI (139 aa)). Residue histidine 67 participates in Zn(2+) binding. Residue glutamate 68 is part of the active site. Histidine 71 contacts Zn(2+).

This sequence belongs to the SprT family. Requires Zn(2+) as cofactor.

It localises to the cytoplasm. In Listeria monocytogenes serotype 4a (strain HCC23), this protein is Protein SprT-like.